The chain runs to 545 residues: CTP synthase (545 aa).

Residues 1 to 266 (MTTNYIFVTG…DDYICKRFSL (266 aa)) are amidoligase domain. Ser14 contacts CTP. Ser14 serves as a coordination point for UTP. ATP-binding positions include 15-20 (SLGKGI) and Asp72. Mg(2+) is bound by residues Asp72 and Glu140. CTP-binding positions include 147–149 (DIE), 187–192 (KTKPTQ), and Lys223. UTP is bound by residues 187–192 (KTKPTQ) and Lys223. Residue 239-241 (KDV) coordinates ATP. A Glutamine amidotransferase type-1 domain is found at 291–542 (TIGMVGKYIE…VKAASEYQKR (252 aa)). Gly352 is a binding site for L-glutamine. Cys379 serves as the catalytic Nucleophile; for glutamine hydrolysis. L-glutamine-binding positions include 380–383 (LGMQ), Glu403, and Arg470. Catalysis depends on residues His515 and Glu517.

This sequence belongs to the CTP synthase family. As to quaternary structure, homotetramer.

It carries out the reaction UTP + L-glutamine + ATP + H2O = CTP + L-glutamate + ADP + phosphate + 2 H(+). It catalyses the reaction L-glutamine + H2O = L-glutamate + NH4(+). The catalysed reaction is UTP + NH4(+) + ATP = CTP + ADP + phosphate + 2 H(+). It participates in pyrimidine metabolism; CTP biosynthesis via de novo pathway; CTP from UDP: step 2/2. Allosterically activated by GTP, when glutamine is the substrate; GTP has no effect on the reaction when ammonia is the substrate. The allosteric effector GTP functions by stabilizing the protein conformation that binds the tetrahedral intermediate(s) formed during glutamine hydrolysis. Inhibited by the product CTP, via allosteric rather than competitive inhibition. Its function is as follows. Catalyzes the ATP-dependent amination of UTP to CTP with either L-glutamine or ammonia as the source of nitrogen. Regulates intracellular CTP levels through interactions with the four ribonucleotide triphosphates. This Klebsiella pneumoniae (strain 342) protein is CTP synthase.